Here is a 320-residue protein sequence, read N- to C-terminus: Beta-ketoacyl-[acyl-carrier-protein] synthase III (320 aa).

Residues Cys114 and His247 contribute to the active site. The interval 248–252 (QANRR) is ACP-binding. Residue Asn277 is part of the active site.

The protein belongs to the thiolase-like superfamily. FabH family. Homodimer.

The protein localises to the cytoplasm. The catalysed reaction is malonyl-[ACP] + acetyl-CoA + H(+) = 3-oxobutanoyl-[ACP] + CO2 + CoA. It participates in lipid metabolism; fatty acid biosynthesis. Functionally, catalyzes the condensation reaction of fatty acid synthesis by the addition to an acyl acceptor of two carbons from malonyl-ACP. Catalyzes the first condensation reaction which initiates fatty acid synthesis and may therefore play a role in governing the total rate of fatty acid production. Possesses both acetoacetyl-ACP synthase and acetyl transacylase activities. Its substrate specificity determines the biosynthesis of branched-chain and/or straight-chain of fatty acids. This chain is Beta-ketoacyl-[acyl-carrier-protein] synthase III, found in Neisseria meningitidis serogroup A / serotype 4A (strain DSM 15465 / Z2491).